The sequence spans 359 residues: tRNA-specific 2-thiouridylase MnmA (359 aa).

ATP is bound by residues 9–16 (GISGGVDS) and Met35. The interval 95 to 97 (NPD) is interaction with target base in tRNA. The active-site Nucleophile is Cys100. Residues Cys100 and Cys197 are joined by a disulfide bond. An ATP-binding site is contributed by Gly124. Residues 147–149 (KDQ) form an interaction with tRNA region. Residue Cys197 is the Cysteine persulfide intermediate of the active site. The segment at 309-310 (RY) is interaction with tRNA.

It belongs to the MnmA/TRMU family.

It is found in the cytoplasm. It catalyses the reaction S-sulfanyl-L-cysteinyl-[protein] + uridine(34) in tRNA + AH2 + ATP = 2-thiouridine(34) in tRNA + L-cysteinyl-[protein] + A + AMP + diphosphate + H(+). Its function is as follows. Catalyzes the 2-thiolation of uridine at the wobble position (U34) of tRNA, leading to the formation of s(2)U34. The chain is tRNA-specific 2-thiouridylase MnmA from Francisella tularensis subsp. tularensis (strain FSC 198).